Here is a 98-residue protein sequence, read N- to C-terminus: Co-chaperonin GroES (98 aa).

This sequence belongs to the GroES chaperonin family. In terms of assembly, heptamer of 7 subunits arranged in a ring. Interacts with the chaperonin GroEL.

Its subcellular location is the cytoplasm. Its function is as follows. Together with the chaperonin GroEL, plays an essential role in assisting protein folding. The GroEL-GroES system forms a nano-cage that allows encapsulation of the non-native substrate proteins and provides a physical environment optimized to promote and accelerate protein folding. GroES binds to the apical surface of the GroEL ring, thereby capping the opening of the GroEL channel. This is Co-chaperonin GroES from Neorickettsia sennetsu (strain ATCC VR-367 / Miyayama) (Ehrlichia sennetsu).